An 885-amino-acid polypeptide reads, in one-letter code: Cadherin-related family member 3 (885 aa).

An N-terminal signal peptide occupies residues 1–19; the sequence is MQEAIILLALLGAMSGGEA. At 20 to 713 the chain is on the extracellular side; the sequence is LHLILLPATG…VYSPSAWYVP (694 aa). 6 Cadherin domains span residues 23–132, 136–236, 237–344, 346–466, 462–566, and 567–695; these read ILLP…PPQF, LAEG…VPRF, TSPT…NPAT, QKFT…RPSY, DRPS…KPIC, and TPNS…RPRV. Residues asparagine 186 and asparagine 257 are each glycosylated (N-linked (GlcNAc...) asparagine). Asparagine 624 is a glycosylation site (N-linked (GlcNAc...) asparagine). Residues 714-734 form a helical membrane-spanning segment; it reads FVITLGSILLLGLLVYLVVLL. Topologically, residues 735–885 are cytoplasmic; it reads AKAIHRHCPC…RAYPKPHPGK (151 aa). The disordered stretch occupies residues 808–885; it reads MPKWKESSHQ…RAYPKPHPGK (78 aa).

As to quaternary structure, (Microbial infection) Interacts (via N-terminus) with human rhinovirus C capsid proteins VP1, VP2 and VP3. As to expression, expressed in bronchial epithelium from adults and in fetal lung tissue.

The protein resides in the cell membrane. Cadherins are calcium-dependent cell adhesion proteins. They preferentially interact with themselves in a homophilic manner in connecting cells; cadherins may thus contribute to the sorting of heterogeneous cell types. Its function is as follows. (Microbial infection) Acts as a receptor for human rhinovirus C. The sequence is that of Cadherin-related family member 3 (CDHR3) from Homo sapiens (Human).